The chain runs to 284 residues: Steroidogenic acute regulatory protein, mitochondrial (284 aa).

Residues 1 to 62 (MFLATFKLCA…RRSSLLGSQL (62 aa)) constitute a mitochondrion transit peptide. A phosphoserine; by PKA mark is found at Ser56 and Ser194. The START domain occupies 66–279 (LYSDQELSYI…LRKRLEASPA (214 aa)).

May interact with TSPO. Expressed within glia and neurons in discrete regions of the brain.

It is found in the mitochondrion. It carries out the reaction cholesterol(in) = cholesterol(out). The protein operates within steroid metabolism; cholesterol metabolism. In terms of biological role, plays a key role in steroid hormone synthesis by enhancing the metabolism of cholesterol into pregnenolone. Transporter that binds to and transport cholesterol through the intermembrane space of the mitochondrion. This Mus musculus (Mouse) protein is Steroidogenic acute regulatory protein, mitochondrial (Star).